Consider the following 457-residue polypeptide: Glucuronide carrier protein homolog (457 aa).

Residues 1-11 (MNQQLSWRTIV) are Cytoplasmic-facing. Residues 12–34 (GYSLGDVANNFAFAMGALFLLSY) traverse the membrane as a helical segment. The Periplasmic portion of the chain corresponds to 35–37 (YTD). Residues 38–60 (VAGVGAAAAGTMLLLVRVFDAFA) form a helical membrane-spanning segment. Residues 61 to 79 (DVFAGRVVDSVNTRWGKFR) lie on the Cytoplasmic side of the membrane. A helical transmembrane segment spans residues 80 to 100 (PFLLFGTAPLMIFSVLVFWVL). The Periplasmic segment spans residues 101–108 (TDWSHGSK). A helical transmembrane segment spans residues 109–129 (VVYAYLTYMGLGLCYSLVNIP). The Cytoplasmic segment spans residues 130–146 (YGSLATAMTQQPQSRAR). A helical transmembrane segment spans residues 147-167 (LGAARGIAASLTFVCLAFLIG). Residues 168–180 (PSIKNSSPEEMVS) lie on the Periplasmic side of the membrane. A helical membrane pass occupies residues 181–201 (VYHFWTIVLAIAGMVLYFICF). Residues 202–228 (KSTRENVVRIVAQPSLNISLQTLKRNR) lie on the Cytoplasmic side of the membrane. A helical transmembrane segment spans residues 229-249 (PLFMLCIGALCVLISTFAVSA). Topologically, residues 250–263 (SSLFYVRYVLNDTG) are periplasmic. The chain crosses the membrane as a helical span at residues 264-284 (LFTVLVLVQNLVGTVASAPLV). Residues 285 to 296 (PGMVARIGKKNT) lie on the Cytoplasmic side of the membrane. The helical transmembrane segment at 297–316 (FLIGALLGTCGYLLFFWVSV) threads the bilayer. Residues 317–320 (WSLP) lie on the Periplasmic side of the membrane. The chain crosses the membrane as a helical span at residues 321 to 343 (VALVALAIASIGQGVTMTVMWAL). The Cytoplasmic portion of the chain corresponds to 344–372 (EADTVEYGEYLTGVRIEGLTYSLFSFTRK). A helical membrane pass occupies residues 373–393 (CGQAIGGSIPAFILGLSGYIA). At 394–408 (NQVQTPEVIMGIRTS) the chain is on the periplasmic side. A helical membrane pass occupies residues 409–429 (IALVPCGFMLLAFVIIWFYPL). Residues 430–457 (TDKKFKEIVVEIDNRKKVQQQLISDITN) are Cytoplasmic-facing.

This sequence belongs to the sodium:galactoside symporter (TC 2.A.2) family.

The protein resides in the cell inner membrane. This Escherichia coli (strain K12) protein is Glucuronide carrier protein homolog (uidB).